The primary structure comprises 318 residues: 1-aminocyclopropane-1-carboxylate oxidase 1 (318 aa).

The 102-residue stretch at proline 153–proline 254 folds into the Fe2OG dioxygenase domain. Fe cation is bound by residues histidine 177, aspartate 179, and histidine 234.

The protein belongs to the iron/ascorbate-dependent oxidoreductase family. Fe cation is required as a cofactor. In terms of tissue distribution, fruit.

The enzyme catalyses 1-aminocyclopropane-1-carboxylate + L-ascorbate + O2 = ethene + L-dehydroascorbate + hydrogen cyanide + CO2 + 2 H2O. It functions in the pathway alkene biosynthesis; ethylene biosynthesis via S-adenosyl-L-methionine; ethylene from S-adenosyl-L-methionine: step 2/2. The sequence is that of 1-aminocyclopropane-1-carboxylate oxidase 1 (ACO1) from Cucumis melo (Muskmelon).